Here is a 212-residue protein sequence, read N- to C-terminus: Ribosomal RNA large subunit methyltransferase E (212 aa).

A disordered region spans residues 1-26; the sequence is MPAERPSVSQKPKNPYKRPDAFTKAA. S-adenosyl-L-methionine-binding residues include Gly63, Trp65, Asp83, Asp101, and Asp122. The active-site Proton acceptor is Lys162.

It belongs to the class I-like SAM-binding methyltransferase superfamily. RNA methyltransferase RlmE family.

Its subcellular location is the cytoplasm. It carries out the reaction uridine(2552) in 23S rRNA + S-adenosyl-L-methionine = 2'-O-methyluridine(2552) in 23S rRNA + S-adenosyl-L-homocysteine + H(+). In terms of biological role, specifically methylates the uridine in position 2552 of 23S rRNA at the 2'-O position of the ribose in the fully assembled 50S ribosomal subunit. This is Ribosomal RNA large subunit methyltransferase E from Sorangium cellulosum (strain So ce56) (Polyangium cellulosum (strain So ce56)).